A 111-amino-acid polypeptide reads, in one-letter code: Class I hydrophobin SC4 (111 aa).

The first 25 residues, 1–25 (MRFSLALLALPALAAAAPVPGGGKG), serve as a signal peptide directing secretion. Disulfide bonds link C30-C37, C38-C72, C86-C92, and C93-C106. An N-linked (GlcNAc...) asparagine glycan is attached at N39.

This sequence belongs to the fungal hydrophobin family. As to quaternary structure, self-assembles to form functional amyloid fibrils called rodlets. Self-assembly into fibrillar rodlets occurs spontaneously at hydrophobic:hydrophilic interfaces and the rodlets further associate laterally to form amphipathic monolayers.

It is found in the secreted. The protein localises to the cell wall. Functionally, aerial growth, conidiation, and dispersal of filamentous fungi in the environment rely upon a capability of their secreting small amphipathic proteins called hydrophobins (HPBs) with low sequence identity. Class I can self-assemble into an outermost layer of rodlet bundles on aerial cell surfaces, conferring cellular hydrophobicity that supports fungal growth, development and dispersal; whereas Class II form highly ordered films at water-air interfaces through intermolecular interactions but contribute nothing to the rodlet structure. SC4 is a dikaryon-specific class I hydrophobin that contributes to the formation of aerial hyphae and fruiting bodies. Plays a role within fruiting bodies by preventing gas channels filling with water under wet conditions, probably serving uninterrupted gas exchange. SC4 cannot fully substitute for SC3. Involved in the unusual characteristic of mounds to adhere to and completely envelop adjacent fruiting bodies on mosaic colonies. This Schizophyllum commune (Split gill fungus) protein is Class I hydrophobin SC4.